Here is a 135-residue protein sequence, read N- to C-terminus: Small ribosomal subunit protein uS12 (135 aa).

The tract at residues 1–20 (MPTINQLVRKGRHSKVTKSK) is disordered. Residues 9–18 (RKGRHSKVTK) are compositionally biased toward basic residues. Aspartate 102 carries the post-translational modification 3-methylthioaspartic acid.

This sequence belongs to the universal ribosomal protein uS12 family. In terms of assembly, part of the 30S ribosomal subunit. Contacts proteins S8 and S17. May interact with IF1 in the 30S initiation complex.

Functionally, with S4 and S5 plays an important role in translational accuracy. Interacts with and stabilizes bases of the 16S rRNA that are involved in tRNA selection in the A site and with the mRNA backbone. Located at the interface of the 30S and 50S subunits, it traverses the body of the 30S subunit contacting proteins on the other side and probably holding the rRNA structure together. The combined cluster of proteins S8, S12 and S17 appears to hold together the shoulder and platform of the 30S subunit. The protein is Small ribosomal subunit protein uS12 of Lactobacillus helveticus (strain DPC 4571).